Consider the following 340-residue polypeptide: Ras association domain-containing protein 1 (340 aa).

N-acetylserine is present on Ser2. Ser2 carries the post-translational modification Phosphoserine. The segment at 2–115 (SAEPELIELR…DLGWDSALER (114 aa)) is mediates interaction with E4F1. The segment at 51–101 (GHRFQPAGPTTHTWCDLCGDFIWGVVRKGLQCAHCKFTCHYRCRALVCLDC) adopts a Phorbol-ester/DAG-type zinc-finger fold. Residues 175 to 185 (SVPSSKKPPSL) are compositionally biased toward low complexity. Positions 175–196 (SVPSSKKPPSLQDARRGTGRST) are disordered. The region spanning 194 to 288 (RSTAVKRRTS…LSFVLKENDS (95 aa)) is the Ras-associating domain. Residues 290 to 337 (EVNWDAFSMPELHNFLRILQREEEEHLRQILQKYSRCRQKIQEALHAC) enclose the SARAH domain. The tract at residues 311-314 (EEEE) is MOAP1-binding.

As to quaternary structure, interacts with MAP1S and XPA. Binds to the N-terminal of CDC20 during prometaphase. Binds to STK3/MST2 and STK4/MST1. Recruited to the TNFRSF1A and TNFRSF10A complexes in response to their respective cognate ligand, after internalization. Can self-associate. Part of a complex with MDM2, DAXX, RASSF1 and USP7. Interacts with MOAP1 and E4F1. Interacts with RSSF5 and probably associates with HRAS via a RSSF1 isoform A-RSSF5 heterodimer. Interacts (via C-terminus) with DAXX (via N-terminus); the interaction is independent of MDM2 and TP53. Interacts (via N-terminus) with MDM2 (via C-terminus); the interaction is independent of TP53. Interacts with RAB39A. Interacts with RAB39B; the interaction is weak. In terms of assembly, interacts with ECM2. Interacts with RAB39B; the interaction is strong. Does not interact with RAB39A.

It localises to the cytoplasm. Its subcellular location is the cytoskeleton. It is found in the microtubule organizing center. The protein resides in the centrosome. The protein localises to the spindle. It localises to the spindle pole. Its subcellular location is the nucleus. In terms of biological role, potential tumor suppressor. Required for death receptor-dependent apoptosis. Mediates activation of Mediates activation of STK3/MST2 and STK4/MST1 during Fas-induced apoptosis by preventing their dephosphorylation. When associated with MOAP1, promotes BAX conformational change and translocation to mitochondrial membranes in response to TNF and TNFSF10 stimulation. Isoform A interacts with CDC20, an activator of the anaphase-promoting complex, APC, resulting in the inhibition of APC activity and mitotic progression. Inhibits proliferation by negatively regulating cell cycle progression at the level of G1/S-phase transition by regulating accumulation of cyclin D1 protein. Isoform C has been shown not to perform these roles, no function has been identified for this isoform. Isoform A disrupts interactions among MDM2, DAXX and USP7, thus contributing to the efficient activation of TP53 by promoting MDM2 self-ubiquitination in cell-cycle checkpoint control in response to DNA damage. The sequence is that of Ras association domain-containing protein 1 from Mus musculus (Mouse).